Reading from the N-terminus, the 335-residue chain is Phosphate acyltransferase (335 aa).

Belongs to the PlsX family. As to quaternary structure, homodimer. Probably interacts with PlsY.

The protein resides in the cytoplasm. It carries out the reaction a fatty acyl-[ACP] + phosphate = an acyl phosphate + holo-[ACP]. It functions in the pathway lipid metabolism; phospholipid metabolism. Functionally, catalyzes the reversible formation of acyl-phosphate (acyl-PO(4)) from acyl-[acyl-carrier-protein] (acyl-ACP). This enzyme utilizes acyl-ACP as fatty acyl donor, but not acyl-CoA. This chain is Phosphate acyltransferase, found in Brevibacillus brevis (strain 47 / JCM 6285 / NBRC 100599).